Here is a 124-residue protein sequence, read N- to C-terminus: MLCPRAAFLVGSFHGVFPGPPASSHWEFWVPSTPVGAYFCPPQPQLTPPNTPKLVSEVEELYKSITALREKLLQAEQSLRNLKDIHMSLEKDVTAMTNSVFIDRQKCMAHRTCYPTILQLAGYQ.

A coiled-coil region spans residues 54-96; the sequence is LVSEVEELYKSITALREKLLQAEQSLRNLKDIHMSLEKDVTAM.

This sequence belongs to the tektin family. Interacts with MIS18A. Interacts (via its coiled-coil region) with MAFF. In terms of tissue distribution, strongly expressed in brain, kidney and ovary. Moderately expressed in liver, spleen, thymus, prostate, testis, small intestine and colon. Weakly expressed in heart, placenta, lung and leukocytes.

It localises to the cytoplasm. The protein localises to the nucleus. It is found in the nucleolus. Its function is as follows. Acts as a coactivator of MAFF transcriptional activity. Inhibits cell growth and colony-forming efficiency. This is MaFF-interacting protein (MAFIP) from Homo sapiens (Human).